Here is a 356-residue protein sequence, read N- to C-terminus: GMP reductase (356 aa).

NADP(+)-binding positions include 26–27 (SR), Lys-78, 132–134 (DVA), and 183–184 (IG). K(+) is bound by residues Gly-184, Gly-186, and Cys-189. Cys-189 functions as the Thioimidate intermediate in the catalytic mechanism. Thr-191 acts as the Proton donor/acceptor in catalysis. Residue Arg-192 participates in K(+) binding. Residues 222–224 (DGG), 245–246 (GG), 271–273 (GMS), and 289–293 (RASEG) contribute to the GMP site. Residues Met-272, 288–289 (YR), and 317–320 (SACT) each bind NADP(+).

The protein belongs to the IMPDH/GMPR family.

The enzyme catalyses IMP + NH4(+) + NADP(+) = GMP + NADPH + 2 H(+). Catalyzes the irreversible NADPH-dependent deamination of GMP to IMP. It functions in the conversion of nucleobase, nucleoside and nucleotide derivatives of G to A nucleotides, and in maintaining the intracellular balance of A and G nucleotides. The protein is GMP reductase of Ascaris suum (Pig roundworm).